A 106-amino-acid polypeptide reads, in one-letter code: Iron-sulfur cluster assembly protein CyaY (106 aa).

This sequence belongs to the frataxin family.

In terms of biological role, involved in iron-sulfur (Fe-S) cluster assembly. May act as a regulator of Fe-S biogenesis. This Citrobacter koseri (strain ATCC BAA-895 / CDC 4225-83 / SGSC4696) protein is Iron-sulfur cluster assembly protein CyaY.